A 979-amino-acid chain; its full sequence is Receptor-type tyrosine-protein phosphatase-like N (979 aa).

The N-terminal stretch at Met1–Ala34 is a signal peptide. An RESP18 homology domain region spans residues Ile35–Pro131. The Lumenal segment spans residues Ile35 to Arg575. The cysteines at positions 53 and 62 are disulfide-linked. Over residues Ile113–Ser127 the composition is skewed to basic and acidic residues. 4 disordered regions span residues Ile113 to Ser171, Gly248 to Leu272, Ser285 to Asp332, and Glu391 to Pro466. Residues Ser308 and Ser309 each carry the phosphoserine modification. Residues Glu400–Pro409 are compositionally biased toward pro residues. The sufficient for dimerization of proICA512 stretch occupies residues Ser449–Arg575. The span at Leu451–Pro466 shows a compositional bias: polar residues. Residues Asn506 and Asn524 are each glycosylated (N-linked (GlcNAc...) asparagine). Residues Ser576–Val600 form a helical membrane-spanning segment. Residues Arg601–Glu732 are sufficient for dimerization of proICA512. The Cytoplasmic segment spans residues Arg601–Gln979. Residues Asn643 to Glu680 are disordered. Residues Ser652–Ser677 show a composition bias toward low complexity. Residues Leu709–Glu969 form the Tyrosine-protein phosphatase domain. Lys754 is covalently cross-linked (Glycyl lysine isopeptide (Lys-Gly) (interchain with G-Cter in SUMO)).

It belongs to the protein-tyrosine phosphatase family. Receptor class 8 subfamily. Homodimer; shown for the unprocessed protein (proICA512) in the endoplasmic reticulum and resolved during protein maturation as ICA512-TMF seems to be predominantly monomeric in secretory granules; however, ICA512-CCF interacts with ICA512-TMF disrupting the ICA512-TMF:SNTB2 complex. The isolated lumenal RESP18 homology domain has been shown to form disulfide-linked homooligomers. Interacts (via cytoplasmic domain) with phosphorylated SNTB2; this protects PTPRN against cleavage by CAPN1 to produce ICA512-CCF. Dephosphorylation of SNTB2 upon insulin stimulation disrupts the interaction and results in PTPRN cleavage. Interacts with SNX19. ICA512-CCF interacts with PIAS4; in the nucleus. Interacts with STAT5B (phosphorylated); down-regulated by ICA512-CCF sumoylation; ICA512-CCF prevents STAT5B dephosphorylation; ICA512-CCF mediates interaction of STAT5B with PIAS4. Interacts (via RESP18 homology domain) with insulin and proinsulin. Interacts with PTPRN2, PTPRA and PTPRE. N-glycosylated. Post-translationally, O-glycosylated. In terms of processing, subject to proteolytic cleavage at multiple sites. Subject to cleavage on a pair of basic residues. On exocytosis of secretory granules in pancreatic beta-cells ICA512-TMF is transiently inserted in the plasma-membrane and cleaved by mu-type calpain CPN1 to yield ICA512-CCF. Sumoylated at two sites including Lys-754. Sumoylation decreases interaction with STAT5. As to expression, detected in pituitary (at protein level).

It localises to the membrane. The protein localises to the cytoplasmic vesicle. The protein resides in the secretory vesicle membrane. It is found in the perikaryon. Its subcellular location is the cell projection. It localises to the axon. The protein localises to the synapse. The protein resides in the cell membrane. It is found in the endosome. Its subcellular location is the nucleus. Its function is as follows. Plays a role in vesicle-mediated secretory processes. Required for normal accumulation of secretory vesicles in hippocampus, pituitary and pancreatic islets. Required for the accumulation of normal levels of insulin-containing vesicles and preventing their degradation. Plays a role in insulin secretion in response to glucose stimuli. Required for normal accumulation of the neurotransmitters norepinephrine, dopamine and serotonin in the brain. In females, but not in males, required for normal accumulation and secretion of pituitary hormones, such as luteinizing hormone (LH) and follicle-stimulating hormone (FSH). Required to maintain normal levels of renin expression and renin release. Seems to lack intrinsic enzyme activity. May regulate catalytic active protein-tyrosine phosphatases such as PTPRA through dimerization. Functionally, ICA512-TMF regulates dynamics and exocytosis of insulin secretory granules (SGs); binding of ICA512-TMF to SNTB2/beta-2-syntrophin is proposed to restrain SGs mobility and exocytosis by tethering them to the actin cytoskeleton depending on UTRN; the function is inhibited by cytoplasmic ICA512-CFF dimerizing with ICA512-TMF and displacing SNTB2. In terms of biological role, ICA512-CCF translocated to the nucleus promotes expression of insulin and other granule-related genes; the function implicates binding to and regulating activity of STAT5B probably by preventing its dephosphorylation and potentially by inducing its sumoylation by recruiting PIAS4. Enhances pancreatic beta-cell proliferation by converging with signaling by STAT5B and STAT3. ICA512-CCF located in the cytoplasm regulates dynamics and exocytosis of insulin secretory granules (SGs) by dimerizing with ICA512-TMF and displacing SNTB2 thus enhancing SGs mobility and exocytosis. This chain is Receptor-type tyrosine-protein phosphatase-like N (PTPRN), found in Bos taurus (Bovine).